The primary structure comprises 228 residues: Cytochrome c oxidase subunit 2 (228 aa).

The Mitochondrial intermembrane portion of the chain corresponds to 1-26 (MSTWANLGLQDSASPLMEQLIFFHDH). The helical transmembrane segment at 27 to 48 (ALLILVMITVLVGYLMFMLFFN) threads the bilayer. The Mitochondrial matrix segment spans residues 49–62 (NYVNRFLLHGQLIE). Residues 63-82 (MIWTILPAIILLFIALPSLR) form a helical membrane-spanning segment. The Mitochondrial intermembrane portion of the chain corresponds to 83–228 (LLYLLDEINE…FIKWISSNNS (146 aa)). Cu cation is bound by residues His161, Cys196, Glu198, Cys200, His204, and Met207. Glu198 serves as a coordination point for Mg(2+).

This sequence belongs to the cytochrome c oxidase subunit 2 family. In terms of assembly, component of the cytochrome c oxidase (complex IV, CIV), a multisubunit enzyme composed of a catalytic core of 3 subunits and several supernumerary subunits. The complex exists as a monomer or a dimer and forms supercomplexes (SCs) in the inner mitochondrial membrane with ubiquinol-cytochrome c oxidoreductase (cytochrome b-c1 complex, complex III, CIII). The cofactor is Cu cation.

It localises to the mitochondrion inner membrane. The catalysed reaction is 4 Fe(II)-[cytochrome c] + O2 + 8 H(+)(in) = 4 Fe(III)-[cytochrome c] + 2 H2O + 4 H(+)(out). Component of the cytochrome c oxidase, the last enzyme in the mitochondrial electron transport chain which drives oxidative phosphorylation. The respiratory chain contains 3 multisubunit complexes succinate dehydrogenase (complex II, CII), ubiquinol-cytochrome c oxidoreductase (cytochrome b-c1 complex, complex III, CIII) and cytochrome c oxidase (complex IV, CIV), that cooperate to transfer electrons derived from NADH and succinate to molecular oxygen, creating an electrochemical gradient over the inner membrane that drives transmembrane transport and the ATP synthase. Cytochrome c oxidase is the component of the respiratory chain that catalyzes the reduction of oxygen to water. Electrons originating from reduced cytochrome c in the intermembrane space (IMS) are transferred via the dinuclear copper A center (CU(A)) of subunit 2 and heme A of subunit 1 to the active site in subunit 1, a binuclear center (BNC) formed by heme A3 and copper B (CU(B)). The BNC reduces molecular oxygen to 2 water molecules using 4 electrons from cytochrome c in the IMS and 4 protons from the mitochondrial matrix. The polypeptide is Cytochrome c oxidase subunit 2 (mt:CoII) (Drosophila simulans (Fruit fly)).